Reading from the N-terminus, the 125-residue chain is Small ribosomal subunit protein uS13 (125 aa).

Positions 92-125 (RRSLPVRGQRTQTNARTRKGKRKTVAGKKKATKK) are disordered. Residues 107–125 (RTRKGKRKTVAGKKKATKK) are compositionally biased toward basic residues.

This sequence belongs to the universal ribosomal protein uS13 family. Part of the 30S ribosomal subunit. Forms a loose heterodimer with protein S19. Forms two bridges to the 50S subunit in the 70S ribosome.

In terms of biological role, located at the top of the head of the 30S subunit, it contacts several helices of the 16S rRNA. In the 70S ribosome it contacts the 23S rRNA (bridge B1a) and protein L5 of the 50S subunit (bridge B1b), connecting the 2 subunits; these bridges are implicated in subunit movement. Contacts the tRNAs in the A and P-sites. The sequence is that of Small ribosomal subunit protein uS13 from Chlorobium limicola (strain DSM 245 / NBRC 103803 / 6330).